The chain runs to 147 residues: Large ribosomal subunit protein uL13 (147 aa).

It belongs to the universal ribosomal protein uL13 family. As to quaternary structure, part of the 50S ribosomal subunit.

In terms of biological role, this protein is one of the early assembly proteins of the 50S ribosomal subunit, although it is not seen to bind rRNA by itself. It is important during the early stages of 50S assembly. The polypeptide is Large ribosomal subunit protein uL13 (Leuconostoc mesenteroides subsp. mesenteroides (strain ATCC 8293 / DSM 20343 / BCRC 11652 / CCM 1803 / JCM 6124 / NCDO 523 / NBRC 100496 / NCIMB 8023 / NCTC 12954 / NRRL B-1118 / 37Y)).